The following is a 161-amino-acid chain: MADDWDTVTKIGSRVGGGGGGGPRLTTIKNKSQLNAAQRAGGIVGTEKKYGTANSSRSEAGSGQFLTKVDRSDDIVKPKTGDKELGMYIMQNREQKKLGNRLEFGKKVGINEKDLARIEKGEVPITQDQVNRIERGLEMFIRGVKKGEPKVKTFKRAADKK.

Positions methionine 1 to leucine 66 are disordered. Over residues arginine 14–proline 23 the composition is skewed to gly residues. 2 stretches are compositionally biased toward polar residues: residues threonine 27–alanine 36 and threonine 52–phenylalanine 65. The HTH cro/C1-type domain maps to methionine 90 to valine 144. Positions arginine 101–lysine 120 form a DNA-binding region, H-T-H motif.

It belongs to the MBF1 family.

Its function is as follows. Transcriptional coactivator that stimulates GCN4-dependent transcriptional activity by bridging the DNA-binding region of GCN4 and TBP (SPT15), thereby recruiting TBP to GCN4-bound promoters. Involved in induction of the ribosome quality control (RQC) pathway; a pathway that degrades nascent peptide chains during problematic translation. Required to prevent stalled ribosomes from frameshifting. The polypeptide is Multiprotein-bridging factor 1 (MBF1) (Pyricularia oryzae (strain 70-15 / ATCC MYA-4617 / FGSC 8958) (Rice blast fungus)).